Consider the following 132-residue polypeptide: Phosphoribosyl-ATP pyrophosphatase (132 aa).

It belongs to the PRA-PH family.

It localises to the cytoplasm. It carries out the reaction 1-(5-phospho-beta-D-ribosyl)-ATP + H2O = 1-(5-phospho-beta-D-ribosyl)-5'-AMP + diphosphate + H(+). It participates in amino-acid biosynthesis; L-histidine biosynthesis; L-histidine from 5-phospho-alpha-D-ribose 1-diphosphate: step 2/9. This chain is Phosphoribosyl-ATP pyrophosphatase, found in Acidovorax sp. (strain JS42).